We begin with the raw amino-acid sequence, 260 residues long: Type III pantothenate kinase (260 aa).

D6–K13 contacts ATP. Substrate is bound by residues Y100 and G107–R110. D109 functions as the Proton acceptor in the catalytic mechanism. T133 lines the ATP pocket. T186 is a binding site for substrate.

It belongs to the type III pantothenate kinase family. As to quaternary structure, homodimer. NH4(+) serves as cofactor. The cofactor is K(+).

The protein localises to the cytoplasm. It carries out the reaction (R)-pantothenate + ATP = (R)-4'-phosphopantothenate + ADP + H(+). Its pathway is cofactor biosynthesis; coenzyme A biosynthesis; CoA from (R)-pantothenate: step 1/5. Its function is as follows. Catalyzes the phosphorylation of pantothenate (Pan), the first step in CoA biosynthesis. The chain is Type III pantothenate kinase from Janthinobacterium sp. (strain Marseille) (Minibacterium massiliensis).